We begin with the raw amino-acid sequence, 377 residues long: Cytochrome c peroxidase, mitochondrial (377 aa).

Residues 1 to 17 constitute a mitochondrion transit peptide; sequence MSFRAPNLIRSAAGRRA. The Proton acceptor role is filled by H138. H261 lines the heme b pocket. W277 functions as the Tryptophan radical intermediate in the catalytic mechanism.

This sequence belongs to the peroxidase family. Cytochrome c peroxidase subfamily. In terms of assembly, forms a one-to-one complex with cytochrome c. It depends on heme b as a cofactor.

It is found in the mitochondrion matrix. Its subcellular location is the mitochondrion intermembrane space. It carries out the reaction 2 Fe(II)-[cytochrome c] + H2O2 + 2 H(+) = 2 Fe(III)-[cytochrome c] + 2 H2O. Functionally, destroys radicals which are normally produced within the cells and which are toxic to biological systems. This Cryptococcus neoformans var. neoformans serotype D (strain JEC21 / ATCC MYA-565) (Filobasidiella neoformans) protein is Cytochrome c peroxidase, mitochondrial (CCP1).